We begin with the raw amino-acid sequence, 741 residues long: Cytosolic phospholipase A2 (741 aa).

Positions 1-116 constitute a C2 domain; sequence MSNIIVEHQY…KVAQMEHVTL (116 aa). The tract at residues 1–172 is phospholipid binding; the sequence is MSNIIVEHQY…IKKLLKMENP (172 aa). The Ca(2+) site is built by aspartate 34, threonine 35, aspartate 37, asparagine 59, aspartate 87, alanine 88, and asparagine 89. Positions 132 to 729 constitute a PLA2c domain; it reads VCASTDLRFS…SLSEIENKKF (598 aa). Serine 223 (nucleophile) is an active-site residue. The interval 406–453 is disordered; it reads TSSSTMEEELEQIKPEHIVGDDSADNEEETQRGGTESADAEDERQRHA. Positions 416–425 are enriched in basic and acidic residues; sequence EQIKPEHIVG. Residue serine 498 is modified to Phosphoserine; by MAPK. Aspartate 540 serves as the catalytic Proton acceptor.

Activated by phosphorylation on a serine residue.

It is found in the cytoplasm. The protein localises to the cytoplasmic vesicle. The enzyme catalyses a 1,2-diacyl-sn-glycero-3-phosphocholine + H2O = a 1-acyl-sn-glycero-3-phosphocholine + a fatty acid + H(+). It catalyses the reaction a 1-acyl-sn-glycero-3-phosphocholine + H2O = sn-glycerol 3-phosphocholine + a fatty acid + H(+). With respect to regulation, stimulated by agonists such as ATP, EGF, thrombin and bradykinin as well as by cytosolic Ca(2+). Its function is as follows. Selectively hydrolyzes arachidonyl phospholipids in the sn-2 position releasing arachidonic acid. Together with its lysophospholipid activity, it is implicated in the initiation of the inflammatory response. In Danio rerio (Zebrafish), this protein is Cytosolic phospholipase A2 (pla2g4a).